The primary structure comprises 149 residues: Large ribosomal subunit protein eL24B (149 aa).

Phosphoserine is present on Ser-50. The interval 96-149 is disordered; sequence QRPEVRAAARAAALKQRKDKRAASESEKKAIKAKSAASSARGQAIKNAKVAARR. Positions 116-125 are enriched in basic and acidic residues; it reads RAASESEKKA.

It belongs to the eukaryotic ribosomal protein eL24 family. As to quaternary structure, component of the large ribosomal subunit (LSU). Mature yeast ribosomes consist of a small (40S) and a large (60S) subunit. The 40S small subunit contains 1 molecule of ribosomal RNA (18S rRNA) and at least 33 different proteins. The large 60S subunit contains 3 rRNA molecules (25S, 5.8S and 5S rRNA) and at least 46 different proteins.

The protein resides in the cytoplasm. In terms of biological role, component of the ribosome, a large ribonucleoprotein complex responsible for the synthesis of proteins in the cell. The small ribosomal subunit (SSU) binds messenger RNAs (mRNAs) and translates the encoded message by selecting cognate aminoacyl-transfer RNA (tRNA) molecules. The large subunit (LSU) contains the ribosomal catalytic site termed the peptidyl transferase center (PTC), which catalyzes the formation of peptide bonds, thereby polymerizing the amino acids delivered by tRNAs into a polypeptide chain. The nascent polypeptides leave the ribosome through a tunnel in the LSU and interact with protein factors that function in enzymatic processing, targeting, and the membrane insertion of nascent chains at the exit of the ribosomal tunnel. In Schizosaccharomyces pombe (strain 972 / ATCC 24843) (Fission yeast), this protein is Large ribosomal subunit protein eL24B (rpl2402).